The primary structure comprises 852 residues: Bifunctional uridylyltransferase/uridylyl-removing enzyme (852 aa).

The segment at 1–318 (MPENLSSALE…STPMRVTLRI (318 aa)) is uridylyltransferase. The interval 319–672 (DDDYIQVNNQ…SRILPQSDSF (354 aa)) is uridylyl-removing. The region spanning 436 to 558 (VDDHILAVVR…VQTHERLSAL (123 aa)) is the HD domain. 2 consecutive ACT domains span residues 673–757 (QVMV…SCNR) and 785–852 (SVEI…EQLA).

This sequence belongs to the GlnD family. Mg(2+) serves as cofactor.

The catalysed reaction is [protein-PII]-L-tyrosine + UTP = [protein-PII]-uridylyl-L-tyrosine + diphosphate. It carries out the reaction [protein-PII]-uridylyl-L-tyrosine + H2O = [protein-PII]-L-tyrosine + UMP + H(+). Uridylyltransferase (UTase) activity is inhibited by glutamine, while glutamine activates uridylyl-removing (UR) activity. Its function is as follows. Modifies, by uridylylation and deuridylylation, the PII regulatory proteins (GlnB and homologs), in response to the nitrogen status of the cell that GlnD senses through the glutamine level. Under low glutamine levels, catalyzes the conversion of the PII proteins and UTP to PII-UMP and PPi, while under higher glutamine levels, GlnD hydrolyzes PII-UMP to PII and UMP (deuridylylation). Thus, controls uridylylation state and activity of the PII proteins, and plays an important role in the regulation of nitrogen assimilation and metabolism. The chain is Bifunctional uridylyltransferase/uridylyl-removing enzyme from Neisseria gonorrhoeae (strain NCCP11945).